The following is a 265-amino-acid chain: 3-methyl-2-oxobutanoate hydroxymethyltransferase (265 aa).

Mg(2+) is bound by residues D44 and D83. 3-methyl-2-oxobutanoate contacts are provided by residues 44 to 45, D83, and K113; that span reads DS. A Mg(2+)-binding site is contributed by E115. E183 acts as the Proton acceptor in catalysis.

This sequence belongs to the PanB family. As to quaternary structure, homodecamer; pentamer of dimers. The cofactor is Mg(2+).

The protein resides in the cytoplasm. It carries out the reaction 3-methyl-2-oxobutanoate + (6R)-5,10-methylene-5,6,7,8-tetrahydrofolate + H2O = 2-dehydropantoate + (6S)-5,6,7,8-tetrahydrofolate. It participates in cofactor biosynthesis; (R)-pantothenate biosynthesis; (R)-pantoate from 3-methyl-2-oxobutanoate: step 1/2. Catalyzes the reversible reaction in which hydroxymethyl group from 5,10-methylenetetrahydrofolate is transferred onto alpha-ketoisovalerate to form ketopantoate. The sequence is that of 3-methyl-2-oxobutanoate hydroxymethyltransferase from Leptospira borgpetersenii serovar Hardjo-bovis (strain L550).